The sequence spans 242 residues: DnaJ homolog subfamily B member 6 (242 aa).

Positions 3–69 (EYYDVLGVQR…KKRDIYDKYG (67 aa)) constitute a J domain.

In terms of assembly, homooligomer.

Its subcellular location is the cytoplasm. It is found in the perinuclear region. It localises to the nucleus. Its function is as follows. Has a stimulatory effect on the ATPase activity of HSP70 in a dose-dependent and time-dependent manner and hence acts as a co-chaperone of HSP70. Plays an indispensable role in the organization of KRT8/KRT18 filaments. Acts as an endogenous molecular chaperone for neuronal proteins including huntingtin. Suppresses aggregation and toxicity of polyglutamine-containing, aggregation-prone proteins. Also reduces cellular toxicity and caspase-3 activity. The sequence is that of DnaJ homolog subfamily B member 6 from Xenopus tropicalis (Western clawed frog).